The chain runs to 200 residues: Serotonin N-acetyltransferase 2, chloroplastic (200 aa).

The transit peptide at 1 to 41 (MQMQAARPRVGVRPRGGIRPFPLPTLSFNNNSNRSACACAC) directs the protein to the chloroplast. In terms of domain architecture, N-acetyltransferase spans 55-195 (FAVRRSSTGL…MAFYRSRQQI (141 aa)).

The protein localises to the cytoplasm. It is found in the plastid. It localises to the chloroplast. The catalysed reaction is serotonin + acetyl-CoA = N-acetylserotonin + CoA + H(+). It carries out the reaction tyramine + acetyl-CoA = N-acetyltyramine + CoA + H(+). The enzyme catalyses tryptamine + acetyl-CoA = N-acetyltryptamine + CoA + H(+). It catalyses the reaction 5-methoxytryptamine + acetyl-CoA = melatonin + CoA + H(+). It participates in aromatic compound metabolism; melatonin biosynthesis; melatonin from serotonin: step 1/2. Its function is as follows. Catalyzes the N-acetylation of serotonin into N-acetylserotonin, the penultimate step in the synthesis of melatonin. Catalyzes in vitro the N-acetylation of tryptamine to produce N-acetyltryptamine, 5-methoxytryptamine to produce melatonin and tyramine to produce N-acetyltyramine. The polypeptide is Serotonin N-acetyltransferase 2, chloroplastic (Oryza sativa subsp. japonica (Rice)).